The primary structure comprises 387 residues: Phosphoglycerate kinase (387 aa).

Substrate-binding positions include D21 to N23, R36, H59 to R62, R113, and R146. Residues K197, E314, and G340–T343 contribute to the ATP site.

This sequence belongs to the phosphoglycerate kinase family. In terms of assembly, monomer.

It is found in the cytoplasm. It carries out the reaction (2R)-3-phosphoglycerate + ATP = (2R)-3-phospho-glyceroyl phosphate + ADP. It participates in carbohydrate degradation; glycolysis; pyruvate from D-glyceraldehyde 3-phosphate: step 2/5. This is Phosphoglycerate kinase from Pseudomonas aeruginosa (strain ATCC 15692 / DSM 22644 / CIP 104116 / JCM 14847 / LMG 12228 / 1C / PRS 101 / PAO1).